The primary structure comprises 241 residues: 1-(5-phosphoribosyl)-5-[(5-phosphoribosylamino)methylideneamino] imidazole-4-carboxamide isomerase (241 aa).

The active-site Proton acceptor is the D10. The active-site Proton donor is D129.

It belongs to the HisA/HisF family.

It is found in the cytoplasm. It carries out the reaction 1-(5-phospho-beta-D-ribosyl)-5-[(5-phospho-beta-D-ribosylamino)methylideneamino]imidazole-4-carboxamide = 5-[(5-phospho-1-deoxy-D-ribulos-1-ylimino)methylamino]-1-(5-phospho-beta-D-ribosyl)imidazole-4-carboxamide. The protein operates within amino-acid biosynthesis; L-histidine biosynthesis; L-histidine from 5-phospho-alpha-D-ribose 1-diphosphate: step 4/9. The sequence is that of 1-(5-phosphoribosyl)-5-[(5-phosphoribosylamino)methylideneamino] imidazole-4-carboxamide isomerase from Salinispora arenicola (strain CNS-205).